A 332-amino-acid chain; its full sequence is Heptahelical transmembrane protein 1 (332 aa).

Positions 1–52 are disordered; the sequence is MDQNGHNDEAETVSCGNGNCKSKIVPGDDHGGDESSGTKRRKKRKTQQKTMK. Over 1 to 98 the chain is Cytoplasmic; the sequence is MDQNGHNDEA…VFSFHNESLN (98 aa). Basic and acidic residues predominate over residues 26–37; the sequence is PGDDHGGDESSG. Positions 38–52 are enriched in basic residues; that stretch reads TKRRKKRKTQQKTMK. A helical transmembrane segment spans residues 99–119; the sequence is VWTHLIGFIFFVALTVANIIH. Residues 120 to 138 are Extracellular-facing; the sequence is HDGFFPVDAKSPGNVTRWP. The helical transmembrane segment at 139-159 threads the bilayer; it reads FFVFLGGSMFCLLASSICHLF. Topologically, residues 160–172 are cytoplasmic; it reads CCHSKELNVFLLR. The chain crosses the membrane as a helical span at residues 173–193; that stretch reads IDYAGITAMIITSFFPPIFYI. Over 194 to 199 the chain is Extracellular; it reads FQCTPR. Residues 200-220 traverse the membrane as a helical segment; sequence WYFIYLAGITSMGIFTIITLF. Residues 221–233 are Cytoplasmic-facing; it reads TPSLSAPKYRAFR. A helical transmembrane segment spans residues 234–254; sequence ALLFASMGLFGIVPAAHALVV. Topologically, residues 255–262 are extracellular; sequence NWGNPQRN. A helical transmembrane segment spans residues 263–283; that stretch reads VTLVYELLMAVFYLVGTGFYV. The Cytoplasmic segment spans residues 284 to 303; sequence GRVPERLKPGWFDRVGHSHQ. A helical transmembrane segment spans residues 304-324; it reads IFHVFVLLGALSHYAAALLFL. Residues 325–332 lie on the Extracellular side of the membrane; sequence DWRDHVGC.

The protein belongs to the ADIPOR family. Interacts (via N-terminus) with SCRM/ICE1. As to expression, expressed in roots, hypocotyls, vasculature of cotyledons and leaves, hydathodes and guard cells. In reproductive organs, expressed in trichomes, veins of sepals, stamens and stigmata of pistils.

The protein resides in the membrane. Its function is as follows. May act as a negative regulator of abscisic acid (ABA)-mediated osmotic stress signaling and function in cross-talk between cold and osmotic signaling. The sequence is that of Heptahelical transmembrane protein 1 (HHP1) from Arabidopsis thaliana (Mouse-ear cress).